Here is a 1218-residue protein sequence, read N- to C-terminus: Coatomer subunit alpha-3 (1218 aa).

WD repeat units follow at residues 7-48 (TKSN…DRFD), 49-88 (EHDGPVRGVHFHATQPLFVSGGDDYKIKVWNYKTHRCLFT), 91-132 (GHLD…AVLT), 133-172 (GHNHYVMCASFHPKEDLVVSASLDQTVRVWDIGALRKKTV), 202-241 (GHDRGVNWASFHPTLPLIVSGADDRQVKLWRMNDTKAWEV), 246-285 (GHMNNVSCVMFHAKQDIIVSNSEDKSIRVWDATKRTGIQT), 288-326 (REHDRFWILAAHPEMNLLAAGHDNGMIVFKLERERPAFS), 363-404 (SLNQ…AGRT), and 450-489 (PLPIAMDAIYYAGTGNLLCKAEDRVTIFDLQQRLILGELQ). The interval 854 to 893 (AMANGGDGFDAEEGEANEEDGEEGGWDLEDLELPPEAETP) is disordered. Residues 862–888 (FDAEEGEANEEDGEEGGWDLEDLELPP) show a composition bias toward acidic residues.

As to quaternary structure, oligomeric complex that consists of at least the alpha, beta, beta', gamma, delta, epsilon and zeta subunits.

The protein resides in the cytoplasm. It localises to the golgi apparatus membrane. Its subcellular location is the cytoplasmic vesicle. The protein localises to the COPI-coated vesicle membrane. The coatomer is a cytosolic protein complex that binds to dilysine motifs and reversibly associates with Golgi non-clathrin-coated vesicles, which further mediate biosynthetic protein transport from the ER, via the Golgi up to the trans Golgi network. Coatomer complex is required for budding from Golgi membranes, and is essential for the retrograde Golgi-to-ER transport of dilysine-tagged proteins. This chain is Coatomer subunit alpha-3, found in Oryza sativa subsp. japonica (Rice).